Here is a 1280-residue protein sequence, read N- to C-terminus: E3 ubiquitin-protein ligase RKP (1280 aa).

In terms of domain architecture, B30.2/SPRY spans 82-269; sequence KLHGDLDVSV…CELNFGAYPF (188 aa). A helical transmembrane segment spans residues 551-571; it reads SVLVSLFSVILHFLSEGFAML. Residues 669-719 are disordered; sequence DRGKNTAQSSRGRCSSIPERSSHVAAECSAGSFSEEIDDKPSTSNQSDPDF. A helical membrane pass occupies residues 834–854; the sequence is ALCMWVVQLLLVLSKMDSVFV. Residues 1217-1252 form an RING-type zinc finger; sequence CCICYAGEANAMIAPCSHRSCYGCITRHLLNCQRCF.

It is found in the membrane. It carries out the reaction S-ubiquitinyl-[E2 ubiquitin-conjugating enzyme]-L-cysteine + [acceptor protein]-L-lysine = [E2 ubiquitin-conjugating enzyme]-L-cysteine + N(6)-ubiquitinyl-[acceptor protein]-L-lysine.. Its function is as follows. E3 ubiquitin-protein ligase that promotes the ubiquitination and proteasomal degradation of KRP1 and KRP2. The sequence is that of E3 ubiquitin-protein ligase RKP (RKP) from Arabidopsis thaliana (Mouse-ear cress).